Here is a 392-residue protein sequence, read N- to C-terminus: LL-diaminopimelate aminotransferase (392 aa).

Substrate-binding residues include Y15, G40, K104, Y128, and N178. Residues 103-104, Y128, N178, Y209, and 237-239 each bind pyridoxal 5'-phosphate; these read SK and SVS. Residue K240 is modified to N6-(pyridoxal phosphate)lysine. Residue R248 coordinates pyridoxal 5'-phosphate. R366 provides a ligand contact to substrate.

This sequence belongs to the class-I pyridoxal-phosphate-dependent aminotransferase family. LL-diaminopimelate aminotransferase subfamily. As to quaternary structure, homodimer. It depends on pyridoxal 5'-phosphate as a cofactor.

The catalysed reaction is (2S,6S)-2,6-diaminopimelate + 2-oxoglutarate = (S)-2,3,4,5-tetrahydrodipicolinate + L-glutamate + H2O + H(+). It participates in amino-acid biosynthesis; L-lysine biosynthesis via DAP pathway; LL-2,6-diaminopimelate from (S)-tetrahydrodipicolinate (aminotransferase route): step 1/1. In terms of biological role, involved in the synthesis of meso-diaminopimelate (m-DAP or DL-DAP), required for both lysine and peptidoglycan biosynthesis. Catalyzes the direct conversion of tetrahydrodipicolinate to LL-diaminopimelate. This is LL-diaminopimelate aminotransferase from Desulforudis audaxviator (strain MP104C).